Reading from the N-terminus, the 300-residue chain is Cation-efflux pump FieF (300 aa).

The next 4 membrane-spanning stretches (helical) occupy residues 12–32 (AAIA…FAWW), 39–59 (ILAA…NLLV), 82–102 (AALA…LTGI), and 114–134 (PGVG…LVSF). Zn(2+) contacts are provided by aspartate 45 and aspartate 49. Histidine 153 and aspartate 157 together coordinate Zn(2+). Transmembrane regions (helical) follow at residues 156 to 176 (SDVM…YGWH) and 178 to 198 (ADAL…LRMG).

It belongs to the cation diffusion facilitator (CDF) transporter (TC 2.A.4) family. FieF subfamily. Homodimer.

It is found in the cell inner membrane. It carries out the reaction Zn(2+)(in) + H(+)(out) = Zn(2+)(out) + H(+)(in). The catalysed reaction is Cd(2+)(in) + H(+)(out) = Cd(2+)(out) + H(+)(in). It catalyses the reaction Fe(2+)(in) + H(+)(out) = Fe(2+)(out) + H(+)(in). Divalent metal cation transporter which exports Zn(2+), Cd(2+) and possibly Fe(2+). May be involved in zinc and iron detoxification by efflux. The chain is Cation-efflux pump FieF from Escherichia coli O157:H7 (strain EC4115 / EHEC).